The following is a 246-amino-acid chain: Small ribosomal subunit protein uS2c (246 aa).

It belongs to the universal ribosomal protein uS2 family.

It is found in the plastid. Its subcellular location is the chloroplast. This Pelargonium hortorum (Common geranium) protein is Small ribosomal subunit protein uS2c (rps2).